Reading from the N-terminus, the 450-residue chain is ATP-dependent protease ATPase subunit HslU (450 aa).

Residues valine 27, glycine 69–glutamate 74, aspartate 263, glutamate 328, and arginine 400 each bind ATP.

The protein belongs to the ClpX chaperone family. HslU subfamily. A double ring-shaped homohexamer of HslV is capped on each side by a ring-shaped HslU homohexamer. The assembly of the HslU/HslV complex is dependent on binding of ATP.

The protein resides in the cytoplasm. In terms of biological role, ATPase subunit of a proteasome-like degradation complex; this subunit has chaperone activity. The binding of ATP and its subsequent hydrolysis by HslU are essential for unfolding of protein substrates subsequently hydrolyzed by HslV. HslU recognizes the N-terminal part of its protein substrates and unfolds these before they are guided to HslV for hydrolysis. The sequence is that of ATP-dependent protease ATPase subunit HslU from Aquifex aeolicus (strain VF5).